The primary structure comprises 735 residues: Post-transcriptional regulator MKT1 (735 aa).

The segment at 475 to 722 is interaction with PBP1; it reads QVIYNTMEET…ANERMKRAQK (248 aa).

It belongs to the XPG/RAD2 endonuclease family. As to quaternary structure, forms a complex composed of at least MKT1, PBP1, XAC1 and LSM12. Within the complex, interacts (via C-terminus) with PBP1; the interaction is direct. Interacts with RNA-binding protein ZC3H11 (via MKT1-binding motif); the interaction is direct. May interact with RNA-binding proteins CFB1 and CFB2. Interacts with the EIF4E6-EIF4G5 translation initiation complex via EIF4G5; the interaction with EIF4G5 is direct.

It localises to the cytoplasm. The protein resides in the cytosol. It is found in the stress granule. Functionally, involved in post-transcriptional regulation of gene expression. Promotes mRNA stabilization by recruiting a complex containing PBP1, LSM12 and XAC1 to mRNAs. Recruited to mRNAs by sequence-specific RNA binding proteins. May regulate translation through interactions with the EIF4E6-EIF4G5 translation initiation complex. In Trypanosoma brucei brucei (strain 927/4 GUTat10.1), this protein is Post-transcriptional regulator MKT1.